A 431-amino-acid polypeptide reads, in one-letter code: Cleavage stimulation factor subunit 1 (431 aa).

The hydrophobic stretch occupies residues 14 to 35 (LYKLIISQLLYDGYISIANGLI). WD repeat units follow at residues 106–145 (SHKG…AKSA), 171–210 (DHVD…AKRA), 215–254 (QEAE…CFVS), 260–301 (QHTD…TTFE), 303–343 (AHDG…TLVR), and 395–430 (GHNN…RSTT).

As to quaternary structure, homodimer. The CSTF complex is composed of CSTF1 (50 kDa subunit), CSTF2 (64 kDa subunit) and CSTF3 (77 kDa subunit). Interacts (via repeats WD) directly with CSTF3. Interacts (via repeat WD6) with BARD1. Interacts with ERCC6. In terms of processing, the N-terminus is blocked.

It is found in the nucleus. Functionally, one of the multiple factors required for polyadenylation and 3'-end cleavage of mammalian pre-mRNAs. May be responsible for the interaction of CSTF with other factors to form a stable complex on the pre-mRNA. The sequence is that of Cleavage stimulation factor subunit 1 (CSTF1) from Homo sapiens (Human).